The following is a 393-amino-acid chain: Synaptic vesicle membrane protein VAT-1 homolog (393 aa).

The tract at residues 1-40 (MSDEREVAEAATGEDASSPPPKTEAASDPQHPAASEGAAA) is disordered. Ser-2 carries the N-acetylserine modification. 5 positions are modified to phosphoserine: Ser-2, Ser-18, Ser-27, Ser-35, and Ser-44.

The protein belongs to the zinc-containing alcohol dehydrogenase family. Quinone oxidoreductase subfamily. As to expression, expressed in brain. Also expressed in glioblastoma cells.

The protein resides in the cytoplasm. Its subcellular location is the mitochondrion outer membrane. In terms of biological role, possesses ATPase activity. Plays a part in calcium-regulated keratinocyte activation in epidermal repair mechanisms. Has no effect on cell proliferation. Negatively regulates mitochondrial fusion in cooperation with mitofusin proteins (MFN1-2). The chain is Synaptic vesicle membrane protein VAT-1 homolog (VAT1) from Homo sapiens (Human).